A 356-amino-acid polypeptide reads, in one-letter code: Ferrochelatase (356 aa).

2 residues coordinate Fe cation: H214 and E295.

The protein belongs to the ferrochelatase family.

Its subcellular location is the cytoplasm. The enzyme catalyses heme b + 2 H(+) = protoporphyrin IX + Fe(2+). The protein operates within porphyrin-containing compound metabolism; protoheme biosynthesis; protoheme from protoporphyrin-IX: step 1/1. Its function is as follows. Catalyzes the ferrous insertion into protoporphyrin IX. The chain is Ferrochelatase from Paraburkholderia phymatum (strain DSM 17167 / CIP 108236 / LMG 21445 / STM815) (Burkholderia phymatum).